Here is a 209-residue protein sequence, read N- to C-terminus: MAIISQFFAPLPSLTGTLTLTGRSFLPLNLDTQFPKPRLSRDRAATLVLQSKGDDSVDASDRIISAVCYFYPFFDGIQYGKFIITQYQPFQILIQPLFPAIRAFKSFPFNGFLIFITLYFVVVRNPNFSRYVRFNTMQAIVLDVLLIFPDLLERSFNPRDGFGLDVVMSLDSTVFLFLLVSLIYGFSACLFGLTPRLPLVAEAADRQVL.

The transit peptide at 1-49 directs the protein to the chloroplast; sequence MAIISQFFAPLPSLTGTLTLTGRSFLPLNLDTQFPKPRLSRDRAATLVL. The next 4 membrane-spanning stretches (helical) occupy residues 63–83, 103–123, 132–152, and 173–193; these read IISAVCYFYPFFDGIQYGKFI, AFKSFPFNGFLIFITLYFVVV, VRFNTMQAIVLDVLLIFPDLL, and TVFLFLLVSLIYGFSACLFGL.

This sequence belongs to the Tic20 family. In terms of assembly, part of the Tic complex. In terms of tissue distribution, expressed in leaves, siliques and roots.

It localises to the plastid. Its subcellular location is the chloroplast inner membrane. May be involved in protein precursor import into chloroplasts. Not redundant with TIC20-I, TIC20-II or TIC20-IV. This is Protein TIC 20-v, chloroplastic (TIC20-V) from Arabidopsis thaliana (Mouse-ear cress).